The following is a 633-amino-acid chain: Threonine--tRNA ligase (633 aa).

The tract at residues 1 to 143 (MRALFLHSNR…SRTIKPKKVK (143 aa)) is editing domain. 2 catalytic regions span residues 220–515 (NPLN…PVLP) and 221–515 (PLND…PVLP). 3 residues coordinate Zn(2+): Cys314, His365, and His488.

It belongs to the class-II aminoacyl-tRNA synthetase family. In terms of assembly, homodimer. The cofactor is Zn(2+).

It localises to the cytoplasm. It carries out the reaction tRNA(Thr) + L-threonine + ATP = L-threonyl-tRNA(Thr) + AMP + diphosphate + H(+). In terms of biological role, catalyzes the attachment of threonine to tRNA(Thr) in a two-step reaction: L-threonine is first activated by ATP to form Thr-AMP and then transferred to the acceptor end of tRNA(Thr). Also edits incorrectly charged L-seryl-tRNA(Thr). In Nanoarchaeum equitans (strain Kin4-M), this protein is Threonine--tRNA ligase.